Reading from the N-terminus, the 357-residue chain is Aminomethyltransferase (357 aa).

This sequence belongs to the GcvT family. As to quaternary structure, the glycine cleavage system is composed of four proteins: P, T, L and H.

It catalyses the reaction N(6)-[(R)-S(8)-aminomethyldihydrolipoyl]-L-lysyl-[protein] + (6S)-5,6,7,8-tetrahydrofolate = N(6)-[(R)-dihydrolipoyl]-L-lysyl-[protein] + (6R)-5,10-methylene-5,6,7,8-tetrahydrofolate + NH4(+). Functionally, the glycine cleavage system catalyzes the degradation of glycine. The polypeptide is Aminomethyltransferase (Halothermothrix orenii (strain H 168 / OCM 544 / DSM 9562)).